The chain runs to 1072 residues: Dyslexia-associated protein KIAA0319 (1072 aa).

A signal peptide spans 1–20 (MAPPTGVLSSLLLLVTIAGC). Residues 21 to 99 (ARKQCSEGRT…PKKMGPIRSY (79 aa)) enclose the MANSC domain. At 21–955 (ARKQCSEGRT…WDGESNCEWS (935 aa)) the chain is on the extracellular side. Disordered regions lie at residues 168 to 277 (LQPS…SLPP) and 295 to 327 (VTPGSTEHSIPTPPTSAAPSESTPSELPISPTT). 3 N-linked (GlcNAc...) asparagine glycosylation sites follow: Asn-196, Asn-219, and Asn-262. Residues 254 to 265 (SQLQEQSSNSSG) are compositionally biased toward polar residues. The segment covering 311 to 320 (AAPSESTPSE) has biased composition (low complexity). PKD domains lie at 341-427 (DNLI…VKPA), 435-524 (VAVV…VNNA), 530-620 (VANA…VQPE), 621-714 (NNRP…VKKE), and 720-811 (RARA…VQPD). N-linked (GlcNAc...) asparagine glycans are attached at residues Asn-394, Asn-421, Asn-498, Asn-513, Asn-536, and Asn-551. An N-linked (GlcNAc...) asparagine glycan is attached at Asn-733. A helical transmembrane segment spans residues 956–976 (IFYVTVLAFTLIVLTGGFTWL). The Cytoplasmic segment spans residues 977–1072 (CICCCKRQKR…ASFSYCSKDR (96 aa)). Positions 995–998 (YTIL) match the Endocytosis signal motif. The tract at residues 1045–1072 (KMERGNPKVSMNGSIRNGASFSYCSKDR) is disordered. The span at 1053–1072 (VSMNGSIRNGASFSYCSKDR) shows a compositional bias: polar residues.

As to quaternary structure, homodimer. Interacts with AP2M1; required for clathrin-mediated endocytosis. N-glycosylated. In terms of processing, O-glycosylated. Post-translationally, shedding of the extracellular domain and intramembrane cleavage produce several proteolytic products. The intramembrane cleavage releases a soluble cytoplasmic polypeptide that translocates to the nucleolus. In terms of tissue distribution, detected in adult brain cortex and fetal frontal lobe (at protein level). Highly expressed in brain cortex, putamen, amygdala, hippocampus and cerebellum.

The protein resides in the cell membrane. The protein localises to the early endosome membrane. Functionally, involved in neuronal migration during development of the cerebral neocortex. May function in a cell autonomous and a non-cell autonomous manner and play a role in appropriate adhesion between migrating neurons and radial glial fibers. May also regulate growth and differentiation of dendrites. This chain is Dyslexia-associated protein KIAA0319 (KIAA0319), found in Homo sapiens (Human).